The sequence spans 155 residues: 3-dehydroquinate dehydratase 1 (155 aa).

Tyr28 (proton acceptor) is an active-site residue. Substrate is bound by residues Asn80, His86, and Asp93. His106 functions as the Proton donor in the catalytic mechanism. Substrate-binding positions include 107 to 108 (VT) and Arg117.

The protein belongs to the type-II 3-dehydroquinase family. As to quaternary structure, homododecamer.

It catalyses the reaction 3-dehydroquinate = 3-dehydroshikimate + H2O. It participates in metabolic intermediate biosynthesis; chorismate biosynthesis; chorismate from D-erythrose 4-phosphate and phosphoenolpyruvate: step 3/7. Functionally, catalyzes a trans-dehydration via an enolate intermediate. In Bradyrhizobium diazoefficiens (strain JCM 10833 / BCRC 13528 / IAM 13628 / NBRC 14792 / USDA 110), this protein is 3-dehydroquinate dehydratase 1 (aroQ1).